The following is a 215-amino-acid chain: Porin MspB (215 aa).

The signal sequence occupies residues 1 to 31; sequence MTAFKRVLIAMISALLAGTTGMFVSAGAAHA.

It belongs to the mycobacterial porin (TC 1.B.24) family. As to quaternary structure, octamers. Probably forms a goblet with the wide end on the exterior of the outer membrane and a central channel. It is not known if mixed oligomers of MspB with other Msp subunits form in vivo.

Its subcellular location is the cell outer membrane. The protein localises to the secreted. The protein resides in the cell wall. Its function is as follows. A backup porin induced when MspA, the major porin, is deleted. Probably forms a water-filled channel which favors the permeation of cations. There are about 2400 porins in wild-type, 800 in an mspA deletion and 150 in a double mspA-mspC deletion. A triple mspA-mspC-mspD deletion mutant has low but detectable channel activity. Different conductance values with maxima at 2.3 and 4.6 nanosiemens might be caused by a simultaneous reconstitution of MspB channels into the membrane or by the existence of different MspB conformations. The sequence is that of Porin MspB (mspB) from Mycolicibacterium smegmatis (strain ATCC 700084 / mc(2)155) (Mycobacterium smegmatis).